Here is a 183-residue protein sequence, read N- to C-terminus: Ribosomal RNA small subunit methyltransferase G (183 aa).

S-adenosyl-L-methionine contacts are provided by residues Gly-60, Phe-65, 111 to 112, and Arg-125; that span reads IE.

It belongs to the methyltransferase superfamily. RNA methyltransferase RsmG family.

The protein localises to the cytoplasm. It carries out the reaction guanosine(527) in 16S rRNA + S-adenosyl-L-methionine = N(7)-methylguanosine(527) in 16S rRNA + S-adenosyl-L-homocysteine. Its function is as follows. Specifically methylates the N7 position of guanine in position 527 of 16S rRNA. The chain is Ribosomal RNA small subunit methyltransferase G from Campylobacter hominis (strain ATCC BAA-381 / DSM 21671 / CCUG 45161 / LMG 19568 / NCTC 13146 / CH001A).